Reading from the N-terminus, the 546-residue chain is CTP synthase (546 aa).

The segment at M1–L269 is amidoligase domain. A CTP-binding site is contributed by S16. Residue S16 participates in UTP binding. Residues S17–V22 and D74 each bind ATP. D74 and E143 together coordinate Mg(2+). CTP contacts are provided by residues D150–E152, K190–Q195, and K226. UTP-binding positions include K190–Q195 and K226. Residues T294–N546 enclose the Glutamine amidotransferase type-1 domain. G356 contacts L-glutamine. C383 serves as the catalytic Nucleophile; for glutamine hydrolysis. Residues L384–Q387, E407, and R474 contribute to the L-glutamine site. Active-site residues include H519 and E521.

Belongs to the CTP synthase family. As to quaternary structure, homotetramer.

The catalysed reaction is UTP + L-glutamine + ATP + H2O = CTP + L-glutamate + ADP + phosphate + 2 H(+). It catalyses the reaction L-glutamine + H2O = L-glutamate + NH4(+). It carries out the reaction UTP + NH4(+) + ATP = CTP + ADP + phosphate + 2 H(+). It functions in the pathway pyrimidine metabolism; CTP biosynthesis via de novo pathway; CTP from UDP: step 2/2. Its activity is regulated as follows. Allosterically activated by GTP, when glutamine is the substrate; GTP has no effect on the reaction when ammonia is the substrate. The allosteric effector GTP functions by stabilizing the protein conformation that binds the tetrahedral intermediate(s) formed during glutamine hydrolysis. Inhibited by the product CTP, via allosteric rather than competitive inhibition. Functionally, catalyzes the ATP-dependent amination of UTP to CTP with either L-glutamine or ammonia as the source of nitrogen. Regulates intracellular CTP levels through interactions with the four ribonucleotide triphosphates. The chain is CTP synthase from Francisella tularensis subsp. tularensis (strain FSC 198).